We begin with the raw amino-acid sequence, 541 residues long: Chaperonin GroEL 2 (541 aa).

Residues 29-32 (TLGP), 86-90 (DGTTT), G413, 476-478 (NAA), and D492 each bind ATP.

Belongs to the chaperonin (HSP60) family. Forms a cylinder of 14 subunits composed of two heptameric rings stacked back-to-back. Interacts with the co-chaperonin GroES.

It is found in the cytoplasm. It catalyses the reaction ATP + H2O + a folded polypeptide = ADP + phosphate + an unfolded polypeptide.. Together with its co-chaperonin GroES, plays an essential role in assisting protein folding. The GroEL-GroES system forms a nano-cage that allows encapsulation of the non-native substrate proteins and provides a physical environment optimized to promote and accelerate protein folding. This Streptomyces coelicolor (strain ATCC BAA-471 / A3(2) / M145) protein is Chaperonin GroEL 2.